We begin with the raw amino-acid sequence, 525 residues long: NADH-quinone oxidoreductase subunit N (525 aa).

A run of 14 helical transmembrane segments spans residues 26-46, 53-73, 90-110, 143-163, 167-187, 202-222, 246-266, 278-298, 314-334, 341-361, 368-388, 411-431, 449-469, and 487-507; these read LSPM…DAFA, VLQP…VVLL, PTLF…LLVA, VQTE…LFVA, LLVM…LCGL, YFLL…FAYG, LYLS…AAPF, PTPI…GALL, PVIW…ALTQ, LAYS…GSNI, MFYL…VSLV, LAGT…TSGF, LVVV…RVIV, and PTLT…LGVA.

The protein belongs to the complex I subunit 2 family. As to quaternary structure, NDH-1 is composed of 14 different subunits. Subunits NuoA, H, J, K, L, M, N constitute the membrane sector of the complex.

The protein localises to the cell membrane. The catalysed reaction is a quinone + NADH + 5 H(+)(in) = a quinol + NAD(+) + 4 H(+)(out). NDH-1 shuttles electrons from NADH, via FMN and iron-sulfur (Fe-S) centers, to quinones in the respiratory chain. The immediate electron acceptor for the enzyme in this species is believed to be a menaquinone. Couples the redox reaction to proton translocation (for every two electrons transferred, four hydrogen ions are translocated across the cytoplasmic membrane), and thus conserves the redox energy in a proton gradient. The polypeptide is NADH-quinone oxidoreductase subunit N (Parafrankia sp. (strain EAN1pec)).